The sequence spans 338 residues: Mitochondrial glutathione transporter SLC25A40 (338 aa).

Solcar repeat units lie at residues valine 13–leucine 131, asparagine 139–tryptophan 223, and proline 233–phenylalanine 327. The next 6 membrane-spanning stretches (helical) occupy residues methionine 19–valine 39, leucine 103–threonine 123, cysteine 142–leucine 162, tryptophan 199–leucine 220, phenylalanine 239–valine 259, and glycine 298–isoleucine 318.

This sequence belongs to the mitochondrial carrier (TC 2.A.29) family.

It localises to the mitochondrion inner membrane. The catalysed reaction is glutathione(in) = glutathione(out). Functionally, probable mitochondrial transporter required for glutathione import into mitochondria. Glutathione, which plays key roles in oxidative metabolism, is produced exclusively in the cytosol and is imported in many organelles. Mitochondrial glutathione is required for the activity and stability of proteins containing iron-sulfur clusters, as well as erythropoiesis. This chain is Mitochondrial glutathione transporter SLC25A40, found in Homo sapiens (Human).